A 304-amino-acid polypeptide reads, in one-letter code: Transmembrane protein 178A (304 aa).

Positions 1 to 25 (MESRGLVTAVSLTLSICSLLLLVTA) are cleaved as a signal peptide. The Extracellular portion of the chain corresponds to 26 to 186 (IFTDHWYETD…LLHLRRITAG (161 aa)). N-linked (GlcNAc...) asparagine glycosylation is present at Asn-165. Residues 187–207 (FLGMAAAVLLCGCIVAAISFF) form a helical membrane-spanning segment. Over 208-215 (WEESLTQH) the chain is Cytoplasmic. Residues 216-236 (VAGLLFLMTGIFCTISLCTYA) form a helical membrane-spanning segment. Residues 237-267 (ASVAYELNRQPKFIYGLPSDVEHGYSWSLFC) are Extracellular-facing. A helical membrane pass occupies residues 268–288 (AWCSLGLIVAAGCLCTAYPFI). Over 289–304 (SRTKILHLKFARDSCV) the chain is Cytoplasmic.

Belongs to the TMEM178 family.

Its subcellular location is the endoplasmic reticulum membrane. Functionally, may act as a negative regulator of osteoclast differentiation. The sequence is that of Transmembrane protein 178A (tmem178a) from Xenopus laevis (African clawed frog).